We begin with the raw amino-acid sequence, 204 residues long: Urease accessory protein UreG (204 aa).

Position 13–20 (13–20 (GPVGSGKT)) interacts with GTP.

The protein belongs to the SIMIBI class G3E GTPase family. UreG subfamily. In terms of assembly, homodimer. UreD, UreF and UreG form a complex that acts as a GTP-hydrolysis-dependent molecular chaperone, activating the urease apoprotein by helping to assemble the nickel containing metallocenter of UreC. The UreE protein probably delivers the nickel.

Its subcellular location is the cytoplasm. In terms of biological role, facilitates the functional incorporation of the urease nickel metallocenter. This process requires GTP hydrolysis, probably effectuated by UreG. This is Urease accessory protein UreG from Acinetobacter baumannii (strain AB307-0294).